We begin with the raw amino-acid sequence, 313 residues long: Cobalamin biosynthesis protein CobD (313 aa).

Transmembrane regions (helical) follow at residues 52–72, 79–99, 154–174, 204–224, and 289–309; these read VAGA…GAAL, CWPV…TSLA, VVPL…YRAI, YVGA…VGGS, and AVVL…MLVY.

This sequence belongs to the CobD/CbiB family.

It is found in the cell membrane. It participates in cofactor biosynthesis; adenosylcobalamin biosynthesis. Converts cobyric acid to cobinamide by the addition of aminopropanol on the F carboxylic group. The polypeptide is Cobalamin biosynthesis protein CobD (Mycobacterium bovis (strain ATCC BAA-935 / AF2122/97)).